Reading from the N-terminus, the 405-residue chain is uncharacterized protein (405 aa).

The next 12 membrane-spanning stretches (helical) occupy residues 19-39, 47-67, 85-105, 107-127, 156-176, 178-198, 224-244, 252-272, 283-303, 309-329, 344-364, and 366-386; these read IVSI…PLAV, VMGF…FATL, IVVF…TAGL, ASLP…LGIG, GIVT…FYHW, GLQA…LLAI, GMAL…ITLF, GAAF…LLFP, VAMI…VATM, IGVL…GVVA, TYTV…GLVM, and WAGV…ALLL.

This sequence belongs to the major facilitator superfamily. YhhS family.

Its subcellular location is the cell inner membrane. This is an uncharacterized protein from Escherichia coli O6:H1 (strain CFT073 / ATCC 700928 / UPEC).